Reading from the N-terminus, the 283-residue chain is ATP synthase gamma chain (283 aa).

It belongs to the ATPase gamma chain family. F-type ATPases have 2 components, CF(1) - the catalytic core - and CF(0) - the membrane proton channel. CF(1) has five subunits: alpha(3), beta(3), gamma(1), delta(1), epsilon(1). CF(0) has three main subunits: a, b and c.

Its subcellular location is the cell membrane. Its function is as follows. Produces ATP from ADP in the presence of a proton gradient across the membrane. The gamma chain is believed to be important in regulating ATPase activity and the flow of protons through the CF(0) complex. In Desulforamulus reducens (strain ATCC BAA-1160 / DSM 100696 / MI-1) (Desulfotomaculum reducens), this protein is ATP synthase gamma chain.